Consider the following 779-residue polypeptide: Guanyl-specific ribonuclease pgl-1 (779 aa).

The interval 203-464 (KLLLEGVKEQ…KRIIDALEKS (262 aa)) is involved in dimerization. Catalysis depends on histidine 453, which acts as the Proton acceptor. Disordered regions lie at residues 563–596 (HEPQ…PTKS), 611–661 (RDAL…GDAT), and 718–779 (GRGG…GGNF). Residues 584-595 (SISTDGWDSPTK) are compositionally biased toward polar residues. Residues 612–626 (DALKPDSVNSHRSEE) are compositionally biased toward basic and acidic residues. The segment at 699 to 772 (GGGGGSYGGR…GGDRGGRGGY (74 aa)) is RNA-binding RGG-box.

As to quaternary structure, homodimer. Interacts with pgl-2 and pgl-3; this association is not required for P-granule localization of either pgl-2 or pgl-3. Interacts with ife-1. Interacts with prmt-1; the interaction is direct. Interacts with nmad-1. Interacts with P granule components meg-1, meg-3 and meg-4. It depends on Does not require metal ions for catalytic activity. as a cofactor.

The protein resides in the cytoplasmic granule. The catalysed reaction is [RNA] containing guanosine + H2O = an [RNA fragment]-3'-guanosine-3'-phosphate + a 5'-hydroxy-ribonucleotide-3'-[RNA fragment].. Guanyl-specific endoribonuclease which cleaves the phosphodiester bond in single-stranded RNA between the 3'-guanylic residue and the 5'-OH residue of adjacent nucleotide, resulting in the formation of a corresponding 2',3'-cyclic phosphate intermediate. Essential role in male and female postembryonic germline development; maternally provided protein maintains a population of proliferating germ cells and zygotic expression is required for correct oogenesis. Together with the P-granule component pgl-3, is involved in the formation of P-granules. Together with pgl-3, probably recruits other granule components such as pos-1, mex-3 and glh-1 to P-granules. In addition, may act redundantly with pgl-3 to protect germ cells from excessive germline apoptosis during normal oogenesis and development of the two gonadal arms. This may in part be through regulating the localization of sir-2.1 which is involved in germ cell apoptosis. May protect somatic cells from excessive apoptosis during normal development. This Caenorhabditis remanei (Caenorhabditis vulgaris) protein is Guanyl-specific ribonuclease pgl-1.